A 184-amino-acid polypeptide reads, in one-letter code: Tumor necrosis factor alpha-induced protein 8-like protein 2 (184 aa).

Ser3 bears the Phosphoserine mark.

It belongs to the TNFAIP8 family. TNFAIP8L2 subfamily. In terms of assembly, may interact with CASP8; however, such result is unclear since could not reproduce the interaction with CASP8. Interacts with RAC1. In terms of processing, phosphorylated by TAK1/MAP3K7; this phosphorylation triggers association with BTRC and subsequent ubiquitination and degradation. Ubiquitinated in a BTRC-depdent manner; leading to degradation mediated through the proteasome pathway.

Its subcellular location is the cytoplasm. The protein localises to the nucleus. The protein resides in the lysosome. Acts as a negative regulator of innate and adaptive immunity by maintaining immune homeostasis. Plays a regulatory role in the Toll-like signaling pathway by determining the strength of LPS-induced signaling and gene expression. Inhibits TCR-mediated T-cell activation and negatively regulate T-cell function to prevent hyperresponsiveness. Also inhibits autolysosome formation via negatively modulating MTOR activation by interacting with RAC1 and promoting the disassociation of the RAC1-MTOR complex. Plays an essential role in NK-cell biology by acting as a checkpoint and displaying an expression pattern correlating with NK-cell maturation process and by negatively regulating NK-cell maturation and antitumor immunity. Mechanistically, suppresses IL-15-triggered mTOR activity in NK-cells. The protein is Tumor necrosis factor alpha-induced protein 8-like protein 2 (TNFAIP8L2) of Otolemur garnettii (Small-eared galago).